A 240-amino-acid polypeptide reads, in one-letter code: MATLFIADLHLCAEEPAITAGFLRFLAREARKADALYILGDLFEAWIGDDDPNPLHRQMAAAIKAVSDSGVPCYFIHGNRDFLLGKRFARESGMTLLPEEKVLELYGRRVLIMHGDTLCTDDIGYQAFRAKVHKPWLQTLFLALPLFVRKRIAARMRANSKEANSSKSLAIMDVNQNAVVSAMEKHQVQWLIHGHTHRPAVHELIANQQPAFRVVLGAWHTEGSMVKVTADDVELIHFPF.

Mn(2+) is bound by residues Asp-8, His-10, Asp-41, Asn-79, and His-114. 79–80 is a substrate binding site; that stretch reads NR. Substrate-binding residues include Asp-122, Ser-160, Asn-164, Lys-167, and His-195. The Mn(2+) site is built by His-195 and His-197.

Belongs to the LpxH family. Requires Mn(2+) as cofactor.

The protein localises to the cell inner membrane. The catalysed reaction is UDP-2-N,3-O-bis[(3R)-3-hydroxytetradecanoyl]-alpha-D-glucosamine + H2O = 2-N,3-O-bis[(3R)-3-hydroxytetradecanoyl]-alpha-D-glucosaminyl 1-phosphate + UMP + 2 H(+). It functions in the pathway glycolipid biosynthesis; lipid IV(A) biosynthesis; lipid IV(A) from (3R)-3-hydroxytetradecanoyl-[acyl-carrier-protein] and UDP-N-acetyl-alpha-D-glucosamine: step 4/6. Its function is as follows. Hydrolyzes the pyrophosphate bond of UDP-2,3-diacylglucosamine to yield 2,3-diacylglucosamine 1-phosphate (lipid X) and UMP by catalyzing the attack of water at the alpha-P atom. Involved in the biosynthesis of lipid A, a phosphorylated glycolipid that anchors the lipopolysaccharide to the outer membrane of the cell. This chain is UDP-2,3-diacylglucosamine hydrolase, found in Escherichia coli O7:K1 (strain IAI39 / ExPEC).